Here is a 376-residue protein sequence, read N- to C-terminus: Succinyl-diaminopimelate desuccinylase (376 aa).

Histidine 66 is a binding site for Zn(2+). The active site involves aspartate 68. Residue aspartate 99 participates in Zn(2+) binding. Residue glutamate 133 is the Proton acceptor of the active site. Positions 134, 162, and 348 each coordinate Zn(2+).

The protein belongs to the peptidase M20A family. DapE subfamily. Homodimer. Requires Zn(2+) as cofactor. Co(2+) serves as cofactor.

The enzyme catalyses N-succinyl-(2S,6S)-2,6-diaminopimelate + H2O = (2S,6S)-2,6-diaminopimelate + succinate. Its pathway is amino-acid biosynthesis; L-lysine biosynthesis via DAP pathway; LL-2,6-diaminopimelate from (S)-tetrahydrodipicolinate (succinylase route): step 3/3. In terms of biological role, catalyzes the hydrolysis of N-succinyl-L,L-diaminopimelic acid (SDAP), forming succinate and LL-2,6-diaminopimelate (DAP), an intermediate involved in the bacterial biosynthesis of lysine and meso-diaminopimelic acid, an essential component of bacterial cell walls. This Thioalkalivibrio sulfidiphilus (strain HL-EbGR7) protein is Succinyl-diaminopimelate desuccinylase.